An 87-amino-acid polypeptide reads, in one-letter code: MANSPQAKKRARQNEARFQINKARRSRIRTFLRRVEEAIASGDKEAATAALRAAQPELMRGVTKGVFHKNTAARKMSRLAARVKVLG.

The protein belongs to the bacterial ribosomal protein bS20 family.

Binds directly to 16S ribosomal RNA. The polypeptide is Small ribosomal subunit protein bS20 (Roseobacter denitrificans (strain ATCC 33942 / OCh 114) (Erythrobacter sp. (strain OCh 114))).